Here is a 231-residue protein sequence, read N- to C-terminus: DNA mismatch repair protein MutH (231 aa).

Belongs to the MutH family.

The protein resides in the cytoplasm. Functionally, sequence-specific endonuclease that cleaves unmethylated GATC sequences. It is involved in DNA mismatch repair. The protein is DNA mismatch repair protein MutH of Shewanella woodyi (strain ATCC 51908 / MS32).